Reading from the N-terminus, the 333-residue chain is MVRMTAVCTAKTVSPVPSTRKELKGAIAELRKKLNAVILAHYYQDPEIQDIADFIGDSLELSRRAASTNADVIVFCGVHFMAETAKILSPEKIVLLPDLEAGCSLADDCPADEFAAFRDKHPDHIVVSYINCTAAVKAQSDLICTSSNAVELVNQLPKDQPILFAPDQNLGRWVQKQSGRKLTIWPGRCMVHETFSEEALLKLKIMHPEAKVIAHPECLENLLELADYIGSTSKLLEFTEISSCTKFIVLTEPGILHQMKLKNPKKEFMDVPGIDGCSCNECPYMRLNTLEKLWSCLSTMKPSIEIEEGVRQKAFIPIQRMLNMKETQEASEH.

His-41 and Ser-58 together coordinate iminosuccinate. Cys-103 is a [4Fe-4S] cluster binding site. Iminosuccinate-binding positions include 129 to 131 and Ser-146; that span reads YIN. Cys-189 lines the [4Fe-4S] cluster pocket. Iminosuccinate is bound by residues 215–217 and Thr-232; that span reads HPE. A [4Fe-4S] cluster-binding site is contributed by Cys-282.

Belongs to the quinolinate synthase family. Type 2 subfamily. [4Fe-4S] cluster is required as a cofactor.

The protein resides in the cytoplasm. It carries out the reaction iminosuccinate + dihydroxyacetone phosphate = quinolinate + phosphate + 2 H2O + H(+). It functions in the pathway cofactor biosynthesis; NAD(+) biosynthesis; quinolinate from iminoaspartate: step 1/1. Catalyzes the condensation of iminoaspartate with dihydroxyacetone phosphate to form quinolinate. In Prochlorococcus marinus (strain MIT 9313), this protein is Quinolinate synthase.